We begin with the raw amino-acid sequence, 51 residues long: Ribosome biogenesis protein Nop10 (51 aa).

It belongs to the NOP10 family.

Involved in ribosome biogenesis; more specifically in 18S rRNA pseudouridylation and in cleavage of pre-rRNA. This Methanococcus maripaludis (strain C7 / ATCC BAA-1331) protein is Ribosome biogenesis protein Nop10.